The sequence spans 382 residues: 8-amino-7-oxononanoate synthase (382 aa).

Arginine 26 is a substrate binding site. 104–105 (GY) is a binding site for pyridoxal 5'-phosphate. Histidine 129 is a substrate binding site. Pyridoxal 5'-phosphate is bound by residues serine 175, 200 to 203 (DEAH), and 232 to 235 (TLSK). N6-(pyridoxal phosphate)lysine is present on lysine 235. Threonine 345 is a substrate binding site.

The protein belongs to the class-II pyridoxal-phosphate-dependent aminotransferase family. BioF subfamily. In terms of assembly, homodimer. It depends on pyridoxal 5'-phosphate as a cofactor.

It carries out the reaction 6-carboxyhexanoyl-[ACP] + L-alanine + H(+) = (8S)-8-amino-7-oxononanoate + holo-[ACP] + CO2. It functions in the pathway cofactor biosynthesis; biotin biosynthesis. Catalyzes the decarboxylative condensation of pimeloyl-[acyl-carrier protein] and L-alanine to produce 8-amino-7-oxononanoate (AON), [acyl-carrier protein], and carbon dioxide. This Mycobacterium sp. (strain KMS) protein is 8-amino-7-oxononanoate synthase.